The primary structure comprises 313 residues: Proline iminopeptidase (313 aa).

The AB hydrolase-1 domain occupies 35-298 (KPVVILHGGP…TPGAGHSAFE (264 aa)). The active-site Nucleophile is the Ser-110. Asp-266 is a catalytic residue. Residue His-294 is the Proton donor of the active site.

This sequence belongs to the peptidase S33 family.

Its subcellular location is the cytoplasm. The catalysed reaction is Release of N-terminal proline from a peptide.. Specifically catalyzes the removal of N-terminal proline residues from peptides. This is Proline iminopeptidase (pip) from Xylella fastidiosa (strain Temecula1 / ATCC 700964).